The following is a 297-amino-acid chain: MDIVTGSTTALITPFKNGKLDESAYANLIKRQINNGINAVCPVGTTGESATLSYAEDKRCIEIAVEICRGTATKVLAGAGSNSTSEAIEAAITAQKCGVDAIFSVAPYYVKPSQEGLYQHYKAIAESVSDMPFMLYNVPGRTVVDISADTVIRLFDDVKNIYGIKEATGSLERTVELLSRRPELKVFSGDDAIDYPILANGGAGITSVTSNLLPDLKSELVKKALNGDFTGSKAINDMLFPINKALFIESNPIMIKAAMYIAGLIDTLEYRLPLVAPSVENMKKIESVMKNYEIKGL.

T46 lines the pyruvate pocket. Y136 acts as the Proton donor/acceptor in catalysis. K165 functions as the Schiff-base intermediate with substrate in the catalytic mechanism. A pyruvate-binding site is contributed by T206.

It belongs to the DapA family. Homotetramer; dimer of dimers.

Its subcellular location is the cytoplasm. The enzyme catalyses L-aspartate 4-semialdehyde + pyruvate = (2S,4S)-4-hydroxy-2,3,4,5-tetrahydrodipicolinate + H2O + H(+). It functions in the pathway amino-acid biosynthesis; L-lysine biosynthesis via DAP pathway; (S)-tetrahydrodipicolinate from L-aspartate: step 3/4. Catalyzes the condensation of (S)-aspartate-beta-semialdehyde [(S)-ASA] and pyruvate to 4-hydroxy-tetrahydrodipicolinate (HTPA). This Sulfurimonas denitrificans (strain ATCC 33889 / DSM 1251) (Thiomicrospira denitrificans (strain ATCC 33889 / DSM 1251)) protein is 4-hydroxy-tetrahydrodipicolinate synthase.